The primary structure comprises 200 residues: uncharacterized protein (200 aa).

Disordered regions lie at residues 1-27 (MTDT…EAET), 42-79 (IPKE…STNA), and 169-200 (HGRA…EHGR). Positions 187–200 (RQMEKTGAGREHGR) are enriched in basic and acidic residues.

This is an uncharacterized protein from Shigella flexneri.